The primary structure comprises 245 residues: Probable transcriptional regulatory protein SUN_1622 (245 aa).

It belongs to the TACO1 family.

It localises to the cytoplasm. The polypeptide is Probable transcriptional regulatory protein SUN_1622 (Sulfurovum sp. (strain NBC37-1)).